The primary structure comprises 385 residues: Cyclin-A3-2 (385 aa).

Residues 1-110 (MADKENSTPA…STSTASPSSG (110 aa)) are disordered. 3 stretches are compositionally biased toward low complexity: residues 7 to 41 (STPA…GAPP), 74 to 88 (PSSK…AAAP), and 96 to 110 (PVSS…PSSG).

The protein belongs to the cyclin family. Cyclin AB subfamily.

The sequence is that of Cyclin-A3-2 (CYCA3-2) from Oryza sativa subsp. japonica (Rice).